A 58-amino-acid chain; its full sequence is UPF0391 membrane protein Shewmr4_2671 (58 aa).

The next 2 helical transmembrane spans lie at 6-26 (LMFLVVAIIAGLFGFTGIAGA) and 28-48 (AGIAKIIFFLFIVLLVISLLV).

It belongs to the UPF0391 family.

Its subcellular location is the cell membrane. In Shewanella sp. (strain MR-4), this protein is UPF0391 membrane protein Shewmr4_2671.